The chain runs to 555 residues: MFCYQCEQTDRTGARPGCASAKGNCGKDSTTADLQDLLVHAVKGIAQYGAIARTMGVPDREAERFVLYAMFTTLTNVNFHAARFVALLREAAQTRDRVKAACEAHARAAGTAVPVLHGPAEWQPADDLAGLLKQAASVGIDAGLDTVGADIVGLRALVLYGLKGVCAYAHHAQVLGYERDDIYEGVDAALAFLAGNPADVDALLAHALDLGRLNLTVMELLDNANTGRFGVQQPSAVRVSPVAGKAILVSGHDLGDLHALLEQTAGTGIQVYTHGEMLPAHAYPSLKAFPHLAGNYGGAWQDQQSDFARFPGPILMTSNCIIEPLPQYRQRIFTTGPVGWPGVRHLEHHDFPTLIRAAQALPGFQATAPEQTITVGFGRHAVLGVADKVIDAVKAGQIRHFFLIGGCDGAAPGRNYYTEFAEQAPDDTVVMTLGCNKYRFNRHAFGDIGGIPRLLDIGQCNDSYSAIRIATALADAFECGVNDLPLSLVISWFEQKAAAVLLTLLALGIRNIRLGPTLPAFVTPGVLAVLVDQFGIQPIGDAGADLAAALARRAA.

[4Fe-4S] cluster is bound by residues Cys-3, Cys-6, Cys-18, and Cys-25. Hybrid [4Fe-2O-2S] cluster-binding residues include His-252, Glu-276, Cys-320, Cys-407, Cys-435, Cys-460, Glu-494, and Lys-496. Cys-407 is subject to Cysteine persulfide.

The protein belongs to the HCP family. [4Fe-4S] cluster serves as cofactor. Hybrid [4Fe-2O-2S] cluster is required as a cofactor.

Its subcellular location is the cytoplasm. It carries out the reaction A + NH4(+) + H2O = hydroxylamine + AH2 + H(+). Its function is as follows. Catalyzes the reduction of hydroxylamine to form NH(3) and H(2)O. This Burkholderia ambifaria (strain MC40-6) protein is Hydroxylamine reductase.